The chain runs to 471 residues: MDVNSEPVKKVLSKYKFRDVAVEELQKVYRVYPDMKIMAGTYTSSDSLQKDLLKLVGNIPVVYQGRSYNIPILLWLLDSFPFTPPICYLRPTSSMVIREGKHVDSKGRIHLPALHNWDHPKSSVNALLAEMIGKFEEEPPLGTKSSAHGDTPSNLLDYVSNLTITEGGNRPDQEVKVSVIGGGDLGIAAVLSIMAKSCVDKLVLIDIPENSTKGGTMDLEIFSLPKVEVSKDLSASAGSKVLVITANAWSDEQSYLSVVQTNVDMYRGIIPRLAQLSPNAVLVIASQPVDVMTHVAWRQSHLLPTQVIGVGCNLDSQRLSHIINISLVANNTGKQAWVIGELSENKVAVWGNMGPGTDQLQALTPVSNSTKPLMDRAFEMIKGRGQRSWSVGLSIADITHSIVTNQKKVHSVTTLAEGWGGIGSKVFLSLPCILGETGSTRLPGVALGSEDEMKLRESVACQVNLFMQLRL.

The UEV domain maps to 2 to 145 (DVNSEPVKKV…EEEPPLGTKS (144 aa)). 183-211 (GDLGIAAVLSIMAKSCVDKLVLIDIPENS) is a binding site for NAD(+).

This sequence in the N-terminal section; belongs to the ubiquitin-conjugating enzyme family. UEV subfamily. In the C-terminal section; belongs to the LDH/MDH superfamily. In terms of assembly, homodimer.

Functionally, possible negative regulator of polyubiquitination. The polypeptide is Ubiquitin-conjugating enzyme E2 variant 3 (uevld) (Danio rerio (Zebrafish)).